The primary structure comprises 464 residues: Argininosuccinate lyase (464 aa).

Belongs to the lyase 1 family. Argininosuccinate lyase subfamily.

Its subcellular location is the cytoplasm. It catalyses the reaction 2-(N(omega)-L-arginino)succinate = fumarate + L-arginine. It participates in amino-acid biosynthesis; L-arginine biosynthesis; L-arginine from L-ornithine and carbamoyl phosphate: step 3/3. This is Argininosuccinate lyase from Streptococcus suis (strain 98HAH33).